The chain runs to 371 residues: tRNA-specific 2-thiouridylase MnmA (371 aa).

ATP-binding positions include 13–20 (GMSGGVDS) and Met39. The tract at residues 99-101 (NPD) is interaction with target base in tRNA. Cys104 serves as the catalytic Nucleophile. Cys104 and Cys200 are joined by a disulfide. Gly128 lines the ATP pocket. The interval 150-152 (KDQ) is interaction with tRNA. Cys200 functions as the Cysteine persulfide intermediate in the catalytic mechanism. An interaction with tRNA region spans residues 308–309 (RY).

Belongs to the MnmA/TRMU family.

It localises to the cytoplasm. The enzyme catalyses S-sulfanyl-L-cysteinyl-[protein] + uridine(34) in tRNA + AH2 + ATP = 2-thiouridine(34) in tRNA + L-cysteinyl-[protein] + A + AMP + diphosphate + H(+). Catalyzes the 2-thiolation of uridine at the wobble position (U34) of tRNA, leading to the formation of s(2)U34. This chain is tRNA-specific 2-thiouridylase MnmA, found in Bacillus cereus (strain ATCC 14579 / DSM 31 / CCUG 7414 / JCM 2152 / NBRC 15305 / NCIMB 9373 / NCTC 2599 / NRRL B-3711).